The following is a 119-amino-acid chain: U-scoloptoxin(16)-Er11a (119 aa).

Positions 1–19 are cleaved as a signal peptide; it reads MKSWTAAVLSLGLIYLSIS.

This sequence belongs to the scoloptoxin-16 family. Post-translationally, contains 4 disulfide bonds. In terms of tissue distribution, expressed by the venom gland.

It localises to the secreted. This is U-scoloptoxin(16)-Er11a from Ethmostigmus rubripes (Giant centipede).